The chain runs to 276 residues: MPELPEVEVTRRGIEPYVAGRRVERVDVRTPALRWPIPPGFARLLHGRLVRKVERRGKYLLFEIDEGWFIVHLGMTGTLRVLRNVPHPPAAAKHDHVDWIFDDFILRFRDPRRFGAVLWHPRSAGDVLDHPLLADLGVEPFAPSFSGALLHRKTRGRKVSVKQALLAGEIVVGVGNIYASESLFRAGIRPTTPAGRISLVRYDLLADAVRVTLAAAIEKGGSTLRDFVGSNGESGYFQLDYFVYDRAGQPCRVCGTPIKQIVQGQRSTYYCPTCQR.

The Schiff-base intermediate with DNA role is filled by Pro-2. The Proton donor role is filled by Glu-3. Residue Lys-58 is the Proton donor; for beta-elimination activity of the active site. DNA-binding residues include His-94, Arg-112, and Arg-157. The FPG-type zinc-finger motif lies at 242-276 (FVYDRAGQPCRVCGTPIKQIVQGQRSTYYCPTCQR). Arg-266 serves as the catalytic Proton donor; for delta-elimination activity.

The protein belongs to the FPG family. In terms of assembly, monomer. It depends on Zn(2+) as a cofactor.

The enzyme catalyses Hydrolysis of DNA containing ring-opened 7-methylguanine residues, releasing 2,6-diamino-4-hydroxy-5-(N-methyl)formamidopyrimidine.. The catalysed reaction is 2'-deoxyribonucleotide-(2'-deoxyribose 5'-phosphate)-2'-deoxyribonucleotide-DNA = a 3'-end 2'-deoxyribonucleotide-(2,3-dehydro-2,3-deoxyribose 5'-phosphate)-DNA + a 5'-end 5'-phospho-2'-deoxyribonucleoside-DNA + H(+). Its function is as follows. Involved in base excision repair of DNA damaged by oxidation or by mutagenic agents. Acts as a DNA glycosylase that recognizes and removes damaged bases. Has a preference for oxidized purines, such as 7,8-dihydro-8-oxoguanine (8-oxoG). Has AP (apurinic/apyrimidinic) lyase activity and introduces nicks in the DNA strand. Cleaves the DNA backbone by beta-delta elimination to generate a single-strand break at the site of the removed base with both 3'- and 5'-phosphates. The polypeptide is Formamidopyrimidine-DNA glycosylase (Paraburkholderia phymatum (strain DSM 17167 / CIP 108236 / LMG 21445 / STM815) (Burkholderia phymatum)).